The primary structure comprises 93 residues: Large ribosomal subunit protein eL29 (93 aa).

The segment covering 1–31 (MAKSKNHSTHHKNRKDHRNGIKKAVVHKKTS) has biased composition (basic residues). Positions 1–33 (MAKSKNHSTHHKNRKDHRNGIKKAVVHKKTSSK) are disordered.

Belongs to the eukaryotic ribosomal protein eL29 family.

In Dictyostelium discoideum (Social amoeba), this protein is Large ribosomal subunit protein eL29 (rpl29).